The sequence spans 66 residues: Large ribosomal subunit protein uL29 (66 aa).

It belongs to the universal ribosomal protein uL29 family.

The protein is Large ribosomal subunit protein uL29 of Roseiflexus castenholzii (strain DSM 13941 / HLO8).